A 91-amino-acid chain; its full sequence is UPF0250 protein PSPTO_4820 (91 aa).

Belongs to the UPF0250 family.

In Pseudomonas syringae pv. tomato (strain ATCC BAA-871 / DC3000), this protein is UPF0250 protein PSPTO_4820.